A 284-amino-acid polypeptide reads, in one-letter code: MELWYTEKHTEYVKFSIKVDRELYTEQSKFQRIDILESKEFGKFFTLDGLMMVTEKDEFIYHDMIVHVPMATNPNIKNVLVIGAGDGGTIRELTRYKTIEKIDMVEIDERVVEVCKKYLPKTAGKLEEERVNIVYEDGLKFVRNKENEYDLIIVDSTDPFGPGEGLFTKEFYGNCYKALSEDGILVNQHESPYYEYYAKSMKDAHEKIQGLFKINKVYQAHIPTYPSGHWLFGFASKKYDPIKDLNAEAWNSLGLKTKYYNTDLHVGCFALPTYVIDMLNENKE.

A PABS domain is found at 2–237 (ELWYTEKHTE…GHWLFGFASK (236 aa)). Residue Gln31 participates in S-methyl-5'-thioadenosine binding. Residues His62 and Asp86 each coordinate spermidine. S-methyl-5'-thioadenosine is bound by residues Glu106 and 137–138 (DG). Asp155 serves as the catalytic Proton acceptor. Residue 155 to 158 (DSTD) participates in spermidine binding. Pro162 lines the S-methyl-5'-thioadenosine pocket.

It belongs to the spermidine/spermine synthase family. Homodimer or homotetramer.

It localises to the cytoplasm. The enzyme catalyses S-adenosyl 3-(methylsulfanyl)propylamine + putrescine = S-methyl-5'-thioadenosine + spermidine + H(+). Its pathway is amine and polyamine biosynthesis; spermidine biosynthesis; spermidine from putrescine: step 1/1. In terms of biological role, catalyzes the irreversible transfer of a propylamine group from the amino donor S-adenosylmethioninamine (decarboxy-AdoMet) to putrescine (1,4-diaminobutane) to yield spermidine. In Clostridium botulinum (strain Eklund 17B / Type B), this protein is Polyamine aminopropyltransferase.